The sequence spans 383 residues: Deoxyguanosinetriphosphate triphosphohydrolase-like protein (383 aa).

The HD domain occupies 62-198; that stretch reads RLTHSLEVST…AALADDISYI (137 aa).

This sequence belongs to the dGTPase family. Type 2 subfamily.

The protein is Deoxyguanosinetriphosphate triphosphohydrolase-like protein of Rickettsia felis (strain ATCC VR-1525 / URRWXCal2) (Rickettsia azadi).